The chain runs to 496 residues: MRVLSGTSLMLCSLLLLLQALCSPGLAPQSRGHLCRTRPTDLVFVVDSSRSVRPVEFEKVKVFLSQVIESLDVGPNATRVGMVNYASTVKQEFSLRAHVSKAALLQAVRRIQPLSTGTMTGLAIQFAITKAFGDAEGGRSRSPDISKVVIVVTDGRPQDSVQDVSARARASGVELFAIGVGSVDKATLRQIASEPQDEHVDYVESYSVIEKLSRKFQEAFCVVSDLCATGDHDCEQVCISSPGSYTCACHEGFTLNSDGKTCNVCSGGGGSSATDLVFLIDGSKSVRPENFELVKKFISQIVDTLDVSDKLAQVGLVQYSSSVRQEFPLGRFHTKKDIKAAVRNMSYMEKGTMTGAALKYLIDNSFTVSSGARPGAQKVGIVFTDGRSQDYINDAAKKAKDLGFKMFAVGVGNAVEDELREIASEPVAEHYFYTADFKTINQIGKKLQKKICVEEDPCACESLVKFQAKVEGLLQALTRKLEAVSKRLAILENTVV.

Positions 1 to 22 are cleaved as a signal peptide; sequence MRVLSGTSLMLCSLLLLLQALC. The VWFA 1 domain occupies 23 to 222; sequence SPGLAPQSRG…SRKFQEAFCV (200 aa). Asn76 is a glycosylation site (N-linked (GlcNAc...) asparagine). Residues 223 to 263 enclose the EGF-like domain; sequence VSDLCATGDHDCEQVCISSPGSYTCACHEGFTLNSDGKTCN. Cystine bridges form between Cys227–Cys238, Cys234–Cys247, and Cys249–Cys262. Residues 264–453 form the VWFA 2 domain; it reads VCSGGGGSSA…GKKLQKKICV (190 aa). An N-linked (GalNAc...) asparagine glycan is attached at Asn344. Residues 467-495 are a coiled coil; it reads QAKVEGLLQALTRKLEAVSKRLAILENTV.

Homotrimer. Part of a complex composed of MATN1 (via VWFA1 domain), type 2 collagens and type 6 collagens. Forms a complex (via covalent bonds) with ACAN; the interaction increases in abundance with increasing age of the organism via an increase in occupancy of MATN1 binding sites. Interacts with COMP. N-glycosylated; reduces binding affinity for type 2 collagens.

It is found in the secreted. It localises to the extracellular space. The protein localises to the extracellular matrix. In terms of biological role, a major component of the extracellular matrix of non-articular cartilage. Binds to type 2 collagens and forms long concatenated protein networks as part of the extracellular matrix. Required for the network-like organization and bundling of collagen fibrils surrounding chondrocytes in the zones of maturation and hypertrophy. Required for mechanotransduction and adaption to mechanical loading in cartilage chondrocytes, resulting in an increase in expression of the extracellular matrix components ACAN and COL2A1. Acts as a moderator of angiogenesis in response to injury. The sequence is that of Matrilin-1 from Homo sapiens (Human).